The primary structure comprises 440 residues: tRNA-2-methylthio-N(6)-dimethylallyladenosine synthase (440 aa).

The region spanning 7-123 is the MTTase N-terminal domain; that stretch reads NTFYIHTFGC…LPQLIEQARS (117 aa). 6 residues coordinate [4Fe-4S] cluster: C16, C52, C86, C159, C163, and C166. The Radical SAM core domain occupies 145-375; the sequence is RQGSISAFVP…IDLQNTISGE (231 aa). A TRAM domain is found at 378–440; the sequence is QQAIGSVVEV…TSATLTGRPV (63 aa).

It belongs to the methylthiotransferase family. MiaB subfamily. As to quaternary structure, monomer. [4Fe-4S] cluster is required as a cofactor.

It localises to the cytoplasm. The catalysed reaction is N(6)-dimethylallyladenosine(37) in tRNA + (sulfur carrier)-SH + AH2 + 2 S-adenosyl-L-methionine = 2-methylsulfanyl-N(6)-dimethylallyladenosine(37) in tRNA + (sulfur carrier)-H + 5'-deoxyadenosine + L-methionine + A + S-adenosyl-L-homocysteine + 2 H(+). In terms of biological role, catalyzes the methylthiolation of N6-(dimethylallyl)adenosine (i(6)A), leading to the formation of 2-methylthio-N6-(dimethylallyl)adenosine (ms(2)i(6)A) at position 37 in tRNAs that read codons beginning with uridine. The protein is tRNA-2-methylthio-N(6)-dimethylallyladenosine synthase of Pelodictyon phaeoclathratiforme (strain DSM 5477 / BU-1).